We begin with the raw amino-acid sequence, 579 residues long: Aspartate--tRNA(Asp/Asn) ligase (579 aa).

Glu-169 is a binding site for L-aspartate. The aspartate stretch occupies residues 193–196 (QLFK). Arg-215 is a binding site for L-aspartate. Residues 215 to 217 (RDE) and Gln-224 each bind ATP. Residue His-437 participates in L-aspartate binding. An ATP-binding site is contributed by Glu-471. Arg-478 contacts L-aspartate. 523–526 (GWDR) contacts ATP. The disordered stretch occupies residues 551–579 (DPLTGAPTPITAEQRREAGVDAVPEQATS).

Belongs to the class-II aminoacyl-tRNA synthetase family. Type 1 subfamily. As to quaternary structure, homodimer.

The protein resides in the cytoplasm. The enzyme catalyses tRNA(Asx) + L-aspartate + ATP = L-aspartyl-tRNA(Asx) + AMP + diphosphate. Its function is as follows. Aspartyl-tRNA synthetase with relaxed tRNA specificity since it is able to aspartylate not only its cognate tRNA(Asp) but also tRNA(Asn). Reaction proceeds in two steps: L-aspartate is first activated by ATP to form Asp-AMP and then transferred to the acceptor end of tRNA(Asp/Asn). In Thermobifida fusca (strain YX), this protein is Aspartate--tRNA(Asp/Asn) ligase.